A 155-amino-acid chain; its full sequence is Small ribosomal subunit protein uS7cz/uS7cy (155 aa).

Belongs to the universal ribosomal protein uS7 family. As to quaternary structure, part of the 30S ribosomal subunit.

It is found in the plastid. The protein resides in the chloroplast. Its function is as follows. One of the primary rRNA binding proteins, it binds directly to 16S rRNA where it nucleates assembly of the head domain of the 30S subunit. The chain is Small ribosomal subunit protein uS7cz/uS7cy (rps7-A) from Guizotia abyssinica (Niger).